Consider the following 418-residue polypeptide: Protease LasA (418 aa).

The signal sequence occupies residues Met-1–Ala-31. The propeptide occupies His-32 to Leu-236. 2 residues coordinate Zn(2+): His-259 and Asp-272. A disulfide bridge connects residues Cys-301 and Cys-347. Catalysis depends on proton donor/acceptor residues His-317 and His-356. His-358 contributes to the Zn(2+) binding site. Cys-391 and Cys-406 are joined by a disulfide.

The protein belongs to the peptidase M23A family. Zn(2+) is required as a cofactor.

The protein localises to the secreted. Involved in proteolysis and elastolysis (degradation of the host protein elastin). Has staphylolytic activity (degrades pentaglycine cross-links in cell wall peptidoglycan), preferring Gly-Gly-|-X substrates where X is Ala or Gly. Enhances the elastolytic but not proteolytic activity of elastase (lasB) and elastolytic activity of other proteases. Degradation of elastin is likely to contribute to the pathogenicity of P.aeruginosa. The sequence is that of Protease LasA (lasA) from Pseudomonas aeruginosa (strain UCBPP-PA14).